A 238-amino-acid polypeptide reads, in one-letter code: Isoamyl acetate-hydrolyzing esterase (238 aa).

The active-site Nucleophile is S12. The active-site Proton donor is D187. H190 serves as the catalytic Proton acceptor.

Belongs to the 'GDSL' lipolytic enzyme family. IAH1 subfamily. As to quaternary structure, homodimer.

It carries out the reaction 3-methylbutyl acetate + H2O = 3-methylbutanol + acetate + H(+). Functionally, plays a crucial role in the hydrolysis of isoamyl acetate in sake mash. Hydrolyzes short chain esters from acetate (C2) to hexanoate (C6), showing more specificity for shorter chain exters. No activity for decanoate (C10) esters. This is Isoamyl acetate-hydrolyzing esterase from Saccharomyces cerevisiae (strain ATCC 204508 / S288c) (Baker's yeast).